Consider the following 102-residue polypeptide: Putative pterin-4-alpha-carbinolamine dehydratase (102 aa).

It belongs to the pterin-4-alpha-carbinolamine dehydratase family.

It catalyses the reaction (4aS,6R)-4a-hydroxy-L-erythro-5,6,7,8-tetrahydrobiopterin = (6R)-L-erythro-6,7-dihydrobiopterin + H2O. This is Putative pterin-4-alpha-carbinolamine dehydratase from Burkholderia cenocepacia (strain HI2424).